The chain runs to 472 residues: Pentatricopeptide repeat-containing protein At5g46100 (472 aa).

PPR repeat units lie at residues 50–84 (DQSS…NCVV), 85–119 (SEDI…DCDP), 120–154 (SQKA…GLPP), 155–190 (TVAS…GCDP), 191–225 (DSYT…DCAP), 226–260 (TVVT…GIEP), 261–295 (NVFT…GCRP), 296–330 (NMVT…GLKP), 331–365 (DAGL…GITP), 373–406 (HVKT…GISV), and 407–441 (EVET…GCIP).

Belongs to the PPR family. P subfamily.

This Arabidopsis thaliana (Mouse-ear cress) protein is Pentatricopeptide repeat-containing protein At5g46100.